The following is a 349-amino-acid chain: Core protein VP7 (349 aa).

Asn-287 carries an N-linked (GlcNAc...) asparagine; by host glycan.

This sequence belongs to the orbivirus VP7 family. In terms of assembly, homotrimer that assemble in a complex of 260 capsomers on an inner scaffold composed of VP3.

Its subcellular location is the virion. The VP7 protein is one of the five proteins (with VP1, VP3, VP4, and VP6) which form the inner capsid of the virus. The polypeptide is Core protein VP7 (Segment-7) (Antilocapra americana (Pronghorn)).